The chain runs to 263 residues: Proteasome subunit beta type-5 (263 aa).

A propeptide spans 1-59 (MALASVLERPLPVNQRGFFGLGGRADLLDLGPGSLSDGLSLAAPGWGVPEEPGIEMLHG) (removed in mature form). Threonine 60 (nucleophile) is an active-site residue. Alanine 108 contacts bortezomib.

The protein belongs to the peptidase T1B family. The 26S proteasome consists of a 20S proteasome core and two 19S regulatory subunits. The 20S proteasome core is a barrel-shaped complex made of 28 subunits that are arranged in four stacked rings. The two outer rings are each formed by seven alpha subunits, and the two inner rings are formed by seven beta subunits. The proteolytic activity is exerted by three beta-subunits PSMB5, PSMB6 and PSMB7. Directly interacts with POMP. Interacts with ABCB1 and TAP1. In terms of assembly, (Microbial infection) Interacts with HIV-1 TAT protein.

The protein resides in the cytoplasm. It localises to the nucleus. It carries out the reaction Cleavage of peptide bonds with very broad specificity.. In terms of biological role, component of the 20S core proteasome complex involved in the proteolytic degradation of most intracellular proteins. This complex plays numerous essential roles within the cell by associating with different regulatory particles. Associated with two 19S regulatory particles, forms the 26S proteasome and thus participates in the ATP-dependent degradation of ubiquitinated proteins. The 26S proteasome plays a key role in the maintenance of protein homeostasis by removing misfolded or damaged proteins that could impair cellular functions, and by removing proteins whose functions are no longer required. Associated with the PA200 or PA28, the 20S proteasome mediates ubiquitin-independent protein degradation. This type of proteolysis is required in several pathways including spermatogenesis (20S-PA200 complex) or generation of a subset of MHC class I-presented antigenic peptides (20S-PA28 complex). Within the 20S core complex, PSMB5 displays a chymotrypsin-like activity. The sequence is that of Proteasome subunit beta type-5 from Homo sapiens (Human).